Reading from the N-terminus, the 433-residue chain is C2H2 type master regulator of conidiophore development brlA (433 aa).

Disordered regions lie at residues 24–49 (SDCP…LYSQ), 240–269 (KSHT…ISGH), and 286–306 (MMQR…LRSN). A compositionally biased stretch (low complexity) spans 30-49 (TSSFSPLDSPTPTPTSLYSQ). Positions 240-264 (KSHTPSTPHRSVSMGTPSGSDTPVS) are enriched in polar residues. Positions 288-302 (QRHRQPSRKPSKKQL) are enriched in basic residues. 2 consecutive C2H2-type zinc fingers follow at residues 321 to 345 (FKCK…MKSH) and 351 to 376 (HVCW…TKTH). Residues 391–423 (ETSQDFDPDFRGQLTPDGRPIYGSKLEDSMPDC) form a disordered region.

The protein resides in the nucleus. Its function is as follows. BrlA, abaA and wetA are pivotal regulators of conidiophore development and conidium maturation. They act individually and together to regulate their own expression and that of numerous other sporulation-specific genes. Binds promoters of target genes at brlA response elements (BREs) containing the conserved sequence 5'-(C/A)(A/G)AGGG(G/A)-3'. Regulates genes involved in conidiogenesis. The chain is C2H2 type master regulator of conidiophore development brlA from Penicillium digitatum (strain PHI26 / CECT 20796) (Green mold).